The chain runs to 438 residues: Acyl-CoA dehydrogenase apdG (438 aa).

Belongs to the acyl-CoA dehydrogenase family. The cofactor is FAD.

Its pathway is secondary metabolite biosynthesis. In terms of biological role, acyl-CoA dehydrogenase; part of the gene cluster that mediates the biosynthesis of aspyridones. The polyketide-amino acid backbone preaspyridone A is first assembled by the PKS-NRPS hybrid apdA. The assembly of preaspyridone A is initiated by loading of malonyl-CoA onto apdA, followed by decarboxylation to yield the acetyl starter unit. The growing polyketide chain then elongates into a tetraketide. The adpA PKS module catalyzes three Claisen condensations, as well as beta-keto processing and methylation. Alpha-methylation step during polyketide synthesis is a prerequisite and a key checkpoint for chain transfer between PKS and NRPS modules. The downstream NRPS module contains the condensation (C), adenylation (A), and thiolation (T) domains and catalyzes the incorporation of tyrosine via the formation of the L-tyrosinyl-thioester and the amide linkage between L-tyrosinyl-thioester and the tetraketide. The bimodular assembly line is terminated with a reductase (R) domain that facilitates formation and release of the tetramic acid product. Because apdA lacks a designated enoylreductase (ER) domain, the required activity is provided the enoyl reductase apdC. ApdC appears to operate with different stereoselectivity in different PKS cycle. Combined with apdC, apdA is proposed to synthesize preaspyridone A via about 20 enzymatic steps. A number of oxidative steps performed successively by the cytochrome P450 monooxygenases apdE and apdB are required for the conversion of preaspyridone A to aspyridone A. The cytochrome P450 monooxygenase apdE is responsible for the oxidative dephenylation of preaspyridone A. Finally, the predicted FAD-dependent monooxygenase apdD and the acyl-CoA dehydrogenase apdG may be involved in the transformation of aspyridone A into aspyridone B. The chain is Acyl-CoA dehydrogenase apdG from Emericella nidulans (strain FGSC A4 / ATCC 38163 / CBS 112.46 / NRRL 194 / M139) (Aspergillus nidulans).